The primary structure comprises 51 residues: Insulin-2 (51 aa).

Cystine bridges form between C8-C37, C20-C50, and C36-C41.

The protein belongs to the insulin family. As to quaternary structure, heterodimer of a B chain and an A chain linked by two disulfide bonds.

The protein resides in the secreted. Functionally, insulin decreases blood glucose concentration. It increases cell permeability to monosaccharides, amino acids and fatty acids. It accelerates glycolysis, the pentose phosphate cycle, and glycogen synthesis in liver. This chain is Insulin-2, found in Katsuwonus pelamis (Skipjack tuna).